The chain runs to 213 residues: Mediator of RNA polymerase II transcription subunit 7 (213 aa).

A disordered region spans residues 96-120 (TELENGTTTEVEPSPQDSQSGTNYE). The span at 97 to 120 (ELENGTTTEVEPSPQDSQSGTNYE) shows a compositional bias: polar residues.

It belongs to the Mediator complex subunit 7 family. As to quaternary structure, component of the Mediator complex.

Its subcellular location is the nucleus. In terms of biological role, component of the Mediator complex, a coactivator involved in the regulated transcription of nearly all RNA polymerase II-dependent genes. Mediator functions as a bridge to convey information from gene-specific regulatory proteins to the basal RNA polymerase II transcription machinery. Mediator is recruited to promoters by direct interactions with regulatory proteins and serves as a scaffold for the assembly of a functional preinitiation complex with RNA polymerase II and the general transcription factors. This chain is Mediator of RNA polymerase II transcription subunit 7 (MED7), found in Kluyveromyces lactis (strain ATCC 8585 / CBS 2359 / DSM 70799 / NBRC 1267 / NRRL Y-1140 / WM37) (Yeast).